The sequence spans 208 residues: dITP/XTP pyrophosphatase (208 aa).

7-12 lines the substrate pocket; sequence SNNAKK. 2 residues coordinate Mg(2+): Glu39 and Asp68. The active-site Proton acceptor is the Asp68. Substrate-binding positions include Ser69, 162–165, Lys185, and 190–191; these read FGYD and HR.

It belongs to the HAM1 NTPase family. As to quaternary structure, homodimer. Requires Mg(2+) as cofactor.

It carries out the reaction XTP + H2O = XMP + diphosphate + H(+). The catalysed reaction is dITP + H2O = dIMP + diphosphate + H(+). The enzyme catalyses ITP + H2O = IMP + diphosphate + H(+). Pyrophosphatase that catalyzes the hydrolysis of nucleoside triphosphates to their monophosphate derivatives, with a high preference for the non-canonical purine nucleotides XTP (xanthosine triphosphate), dITP (deoxyinosine triphosphate) and ITP. Seems to function as a house-cleaning enzyme that removes non-canonical purine nucleotides from the nucleotide pool, thus preventing their incorporation into DNA/RNA and avoiding chromosomal lesions. This is dITP/XTP pyrophosphatase from Methylibium petroleiphilum (strain ATCC BAA-1232 / LMG 22953 / PM1).